The primary structure comprises 259 residues: Adenosylcobinamide-GDP ribazoletransferase (259 aa).

The next 7 helical transmembrane spans lie at 41-61, 67-87, 119-139, 148-168, 179-199, 200-220, and 237-257; these read AAIW…AIVF, FGLA…IATG, IGAY…NVLS, LFAL…FMHL, AGAG…GAIP, LLLL…LLFA, and TIGA…SVAL.

This sequence belongs to the CobS family. Mg(2+) serves as cofactor.

The protein localises to the cell inner membrane. It carries out the reaction alpha-ribazole + adenosylcob(III)inamide-GDP = adenosylcob(III)alamin + GMP + H(+). It catalyses the reaction alpha-ribazole 5'-phosphate + adenosylcob(III)inamide-GDP = adenosylcob(III)alamin 5'-phosphate + GMP + H(+). It participates in cofactor biosynthesis; adenosylcobalamin biosynthesis; adenosylcobalamin from cob(II)yrinate a,c-diamide: step 7/7. Its function is as follows. Joins adenosylcobinamide-GDP and alpha-ribazole to generate adenosylcobalamin (Ado-cobalamin). Also synthesizes adenosylcobalamin 5'-phosphate from adenosylcobinamide-GDP and alpha-ribazole 5'-phosphate. This is Adenosylcobinamide-GDP ribazoletransferase from Mesorhizobium japonicum (strain LMG 29417 / CECT 9101 / MAFF 303099) (Mesorhizobium loti (strain MAFF 303099)).